A 48-amino-acid chain; its full sequence is Large ribosomal subunit protein bL36c (48 aa).

This sequence belongs to the bacterial ribosomal protein bL36 family.

It localises to the plastid. The protein localises to the chloroplast. The polypeptide is Large ribosomal subunit protein bL36c (rpl36) (Guillardia theta (Cryptophyte)).